A 91-amino-acid chain; its full sequence is Probable Fe(2+)-trafficking protein (91 aa).

It belongs to the Fe(2+)-trafficking protein family.

In terms of biological role, could be a mediator in iron transactions between iron acquisition and iron-requiring processes, such as synthesis and/or repair of Fe-S clusters in biosynthetic enzymes. This Burkholderia thailandensis (strain ATCC 700388 / DSM 13276 / CCUG 48851 / CIP 106301 / E264) protein is Probable Fe(2+)-trafficking protein.